We begin with the raw amino-acid sequence, 564 residues long: Pyruvate decarboxylase (564 aa).

Positions 28 and 115 each coordinate pyruvate. Thiamine diphosphate-binding positions include threonine 390 and 413–415 (GSI). Aspartate 444 is a binding site for Mg(2+). Thiamine diphosphate-binding positions include 445 to 446 (GS) and 471 to 476 (NNGYTI). Positions 471 and 473 each coordinate Mg(2+). Glutamate 477 contributes to the pyruvate binding site.

It belongs to the TPP enzyme family. Homotetramer. Mg(2+) serves as cofactor. It depends on thiamine diphosphate as a cofactor.

The catalysed reaction is a 2-oxocarboxylate + H(+) = an aldehyde + CO2. It catalyses the reaction pyruvate + H(+) = acetaldehyde + CO2. The polypeptide is Pyruvate decarboxylase (PDC) (Hanseniaspora uvarum (Yeast)).